The chain runs to 342 residues: Flavanone 3-dioxygenase 2 (342 aa).

The Fe2OG dioxygenase domain maps to Q193 to P293. Fe cation is bound by residues H217, D219, and H274. R284 contributes to the 2-oxoglutarate binding site.

It belongs to the iron/ascorbate-dependent oxidoreductase family. Requires Fe(2+) as cofactor. L-ascorbate serves as cofactor. In terms of tissue distribution, expressed in roots, leaves and stems. Expressed at low levels in seeds.

The catalysed reaction is a (2S)-flavan-4-one + 2-oxoglutarate + O2 = a (2R,3R)-dihydroflavonol + succinate + CO2. It participates in secondary metabolite biosynthesis; flavonoid biosynthesis. Functionally, catalyzes the 3-beta-hydroxylation of 2S-flavanones to 2R,3R-dihydroflavonols which are intermediates in the biosynthesis of flavonols, anthocyanidins, catechins and proanthocyanidins in plants. Converts (2S)-eriodictyol to (+)-taxifolin and (2S)-naringenin to (+)-(2R/3R)-dihydrokaempferol in vitro. The polypeptide is Flavanone 3-dioxygenase 2 (Oryza sativa subsp. japonica (Rice)).